The chain runs to 580 residues: High affinity choline transporter 1 (580 aa).

The Extracellular portion of the chain corresponds to 1–6; the sequence is MSFHVE. Residues 7 to 27 form a helical membrane-spanning segment; the sequence is GLVAIILFYLLIFLVGIWAAW. The Cytoplasmic segment spans residues 28–48; it reads KTKNSGNPEERSEAIIVGGRD. A helical membrane pass occupies residues 49-69; it reads IGLLVGGFTMTATWVGGGYIN. Over 70–81 the chain is Extracellular; the sequence is GTAEAVYGPGCG. Residues 82–102 form a helical membrane-spanning segment; the sequence is LAWAQAPIGYSLSLILGGLFF. Residues 103-125 are Cytoplasmic-facing; that stretch reads AKPMRSKGYVTMLDPFQQIYGKR. A helical transmembrane segment spans residues 126–146; sequence MGGLLFIPALMGEMFWAAAIF. Topologically, residues 147-164 are extracellular; that stretch reads SALGATISVIIDVDVNIS. A helical membrane pass occupies residues 165–185; that stretch reads VIVSALIAILYTLVGGLYSVA. Over 186–191 the chain is Cytoplasmic; sequence YTDVVQ. A helical transmembrane segment spans residues 192-212; sequence LFCIFIGLWISVPFALSHPAV. Topologically, residues 213–237 are extracellular; it reads TDIGFTAVHAKYQSPWLGTIESVEV. Residues 238-258 form a helical membrane-spanning segment; it reads YTWLDNFLLLMLGGIPWQAYF. Over 259 to 274 the chain is Cytoplasmic; that stretch reads QRVLSSSSATYAQVLS. The chain crosses the membrane as a helical span at residues 275–295; sequence FLAAFGCLVMALPAICIGAIG. Residues 296-317 lie on the Extracellular side of the membrane; it reads ASTDWNQTAYGYPDPKTKEEAD. Asparagine 301 carries an N-linked (GlcNAc...) asparagine glycan. Residues 318-338 form a helical membrane-spanning segment; it reads MILPIVLQYLCPVYISFFGLG. Topologically, residues 339-376 are cytoplasmic; that stretch reads AVSAAVMSSADSSILSASSMFARNIYQLSFRQNASDKE. The chain crosses the membrane as a helical span at residues 377 to 397; sequence IVWVMRITVLVFGASATAMAL. Over 398-406 the chain is Extracellular; it reads LTKTVYGLW. Residues 407–427 form a helical membrane-spanning segment; the sequence is YLSSDLVYIIIFPQLLCVLFI. The Cytoplasmic segment spans residues 428–435; the sequence is KGTNTYGA. The chain crosses the membrane as a helical span at residues 436–456; sequence VAGYIFGLFLRITGGEPYLYL. The Extracellular portion of the chain corresponds to 457–481; sequence QPLIFYPGYYSDKNGIYNQRFPFKT. Residues 482–502 traverse the membrane as a helical segment; it reads LSMVTSFFTNICVSYLAKYLF. The mediates interaction with SEC14L1 stretch occupies residues 502–580; it reads FESGTLPPKL…EGSGTEDNLQ (79 aa). Residues 503–580 lie on the Cytoplasmic side of the membrane; that stretch reads ESGTLPPKLD…EGSGTEDNLQ (78 aa). Positions 527 to 532 match the Dileucine-like motif motif; the sequence is DKTILV.

It belongs to the sodium:solute symporter (SSF) (TC 2.A.21) family. As to quaternary structure, homooligomerizes at cell surface. Interacts with SEC14L1; may regulate SLC5A7. Phosphorylated by PKC and dephosphorylated by PP1/PP2A. In terms of tissue distribution, found in spinal cord, brain-stem, mid-brain and striatum. Specific for cholinergic neurons.

The protein localises to the presynaptic cell membrane. The protein resides in the cell projection. It localises to the axon. Its subcellular location is the early endosome membrane. It is found in the cytoplasmic vesicle. The protein localises to the secretory vesicle. The protein resides in the synaptic vesicle membrane. It catalyses the reaction choline(out) + n Na(+)(out) = choline(in) + n Na(+)(in). Choline uptake activity is regulated by SLC5A7/CHT1 internalization (inactive form) from the cell surface and recycling of internalized SLC5A7/CHT1 into the cell surface (active form). Activated by extracellular chloride ion. Specifically inhibited by nanomolar concentrations of hemicholinium 3. High-affinity Na(+)-coupled choline transmembrane symporter. Functions as an electrogenic, voltage-dependent transporter with variable charge/choline stoichiometry. Choline uptake and choline-induced current is also Cl(-)-dependent where Cl(-) is likely a regulatory ion rather than cotransported ion. Plays a critical role in acetylcholine (ACh) synthesis by taking up the substrate choline from the synaptic cleft into the presynaptic nerve terminals after neurotransmitter release. SLC5A7/CHT1-mediated choline high-affinity transport in cholinergic neurons is the rate-limiting step for production of ACh, thereby facilitating communication by subsequent action potentials. Localized predominantly in presynaptic terminal intracellular organelles, and translocated to the plasma membrane in active form in response to neuronal activity. The chain is High affinity choline transporter 1 from Mus musculus (Mouse).